The sequence spans 366 residues: Chorismate synthase (366 aa).

Residue Arg-48 participates in NADP(+) binding. Residues Arg-125–Ser-127, Asn-241–Ala-242, Gly-285, Lys-300–Ser-304, and Arg-326 contribute to the FMN site.

Belongs to the chorismate synthase family. As to quaternary structure, homotetramer. FMNH2 is required as a cofactor.

It catalyses the reaction 5-O-(1-carboxyvinyl)-3-phosphoshikimate = chorismate + phosphate. The protein operates within metabolic intermediate biosynthesis; chorismate biosynthesis; chorismate from D-erythrose 4-phosphate and phosphoenolpyruvate: step 7/7. Its function is as follows. Catalyzes the anti-1,4-elimination of the C-3 phosphate and the C-6 proR hydrogen from 5-enolpyruvylshikimate-3-phosphate (EPSP) to yield chorismate, which is the branch point compound that serves as the starting substrate for the three terminal pathways of aromatic amino acid biosynthesis. This reaction introduces a second double bond into the aromatic ring system. The sequence is that of Chorismate synthase from Roseobacter denitrificans (strain ATCC 33942 / OCh 114) (Erythrobacter sp. (strain OCh 114)).